The chain runs to 112 residues: Putative galactitol utilization operon repressor (112 aa).

Residues S5–K60 enclose the HTH deoR-type domain. The segment at residues V22 to D41 is a DNA-binding region (H-T-H motif).

Functionally, repressor of the gat operon for galacticol transport and metabolism. In K12 strains the operon is constitutively expressed because this gene is inactive. The chain is Putative galactitol utilization operon repressor (gatR) from Escherichia coli (strain K12).